We begin with the raw amino-acid sequence, 279 residues long: Arabinooligosaccharides transport system permease protein AraQ (279 aa).

A run of 6 helical transmembrane segments spans residues 8 to 28 (ILSWLLTIGFAFIAFIAVFPL), 79 to 99 (VWISIVIVVLSLLFSSMVGYA), 110 to 130 (FFFLLVLIILMIPFEILMLPL), 140 to 160 (VNTYTAVILPAIVAPIAVFFF), 184 to 204 (GIFFKIMLPLMGPSLAAMAIL), and 245 to 265 (ILLAGSVMTIVPIVILFIFFQ). The ABC transmembrane type-1 domain occupies 75-264 (FGNSVWISIV…VPIVILFIFF (190 aa)).

It belongs to the binding-protein-dependent transport system permease family. MalFG subfamily. As to quaternary structure, the complex is composed of two ATP-binding proteins (MsmX), two transmembrane proteins (AraP and AraQ) and a solute-binding protein (AraN).

It localises to the cell membrane. Its function is as follows. Part of the ABC transporter complex AraNPQ involved in the uptake of arabinooligosaccharides. Responsible for the translocation of the substrate across the membrane. In Halalkalibacterium halodurans (strain ATCC BAA-125 / DSM 18197 / FERM 7344 / JCM 9153 / C-125) (Bacillus halodurans), this protein is Arabinooligosaccharides transport system permease protein AraQ (araQ).